The chain runs to 308 residues: UDP-3-O-acyl-N-acetylglucosamine deacetylase (308 aa).

3 residues coordinate Zn(2+): H78, H235, and D239. H262 serves as the catalytic Proton donor.

Belongs to the LpxC family. Zn(2+) is required as a cofactor.

The catalysed reaction is a UDP-3-O-[(3R)-3-hydroxyacyl]-N-acetyl-alpha-D-glucosamine + H2O = a UDP-3-O-[(3R)-3-hydroxyacyl]-alpha-D-glucosamine + acetate. It functions in the pathway glycolipid biosynthesis; lipid IV(A) biosynthesis; lipid IV(A) from (3R)-3-hydroxytetradecanoyl-[acyl-carrier-protein] and UDP-N-acetyl-alpha-D-glucosamine: step 2/6. Catalyzes the hydrolysis of UDP-3-O-myristoyl-N-acetylglucosamine to form UDP-3-O-myristoylglucosamine and acetate, the committed step in lipid A biosynthesis. This is UDP-3-O-acyl-N-acetylglucosamine deacetylase from Anaeromyxobacter dehalogenans (strain 2CP-C).